The chain runs to 334 residues: N-acetyl-gamma-glutamyl-phosphate reductase (334 aa).

Cys-145 is an active-site residue. The segment at 173–192 (GISGSGQDPTEGTHYPNVTQ) is disordered.

Belongs to the NAGSA dehydrogenase family. Type 1 subfamily.

It is found in the cytoplasm. It carries out the reaction N-acetyl-L-glutamate 5-semialdehyde + phosphate + NADP(+) = N-acetyl-L-glutamyl 5-phosphate + NADPH + H(+). It functions in the pathway amino-acid biosynthesis; L-arginine biosynthesis; N(2)-acetyl-L-ornithine from L-glutamate: step 3/4. Functionally, catalyzes the NADPH-dependent reduction of N-acetyl-5-glutamyl phosphate to yield N-acetyl-L-glutamate 5-semialdehyde. This is N-acetyl-gamma-glutamyl-phosphate reductase from Methanocella arvoryzae (strain DSM 22066 / NBRC 105507 / MRE50).